The chain runs to 350 residues: Hepatocyte nuclear factor 3-gamma (350 aa).

Positions 116 to 207 (AKPPYSYISL…GNMFENGCYL (92 aa)) form a DNA-binding region, fork-head. The tract at residues 217-276 (EKVKKGGSGAATTTRNGTGSAASTTTPAATVTSPPQPPPPAPEPEAQGGEDVGALDCGSP) is disordered. The segment covering 226–249 (AATTTRNGTGSAASTTTPAATVTS) has biased composition (low complexity). A compositionally biased stretch (pro residues) spans 250–259 (PPQPPPPAPE).

As to quaternary structure, interacts with FOXA2. Expressed in erythroleukemia and hepatoma cell lines and in liver and pancreas. Not expressed in any other cell lines or tissues examined.

It localises to the nucleus. Its function is as follows. Transcription factor that is thought to act as a 'pioneer' factor opening the compacted chromatin for other proteins through interactions with nucleosomal core histones and thereby replacing linker histones at target enhancer and/or promoter sites. Originally described as a transcription activator for a number of liver genes such as AFP, albumin, tyrosine aminotransferase, PEPCK, etc. Interacts with the cis-acting regulatory regions of these genes. Involved in glucose homeostasis; binds to and activates transcription from the G6PC1 promoter. Binds to the CYP3A4 promoter and activates its transcription in cooperation with CEBPA. Binds to the CYP3A7 promoter together with members of the CTF/NF-I family. Involved in regulation of neuronal-specific transcription. May be involved in regulation of spermatogenesis. The protein is Hepatocyte nuclear factor 3-gamma (FOXA3) of Homo sapiens (Human).